The chain runs to 371 residues: Cytochrome b (371 aa).

The next 4 membrane-spanning stretches (helical) occupy residues 25 to 45 (FGSM…FLAV), 69 to 90 (WMMQ…YIHI), 105 to 125 (WMSG…GYVL), and 170 to 190 (FFAL…LHII). Heme b is bound by residues His75 and His89. His174 and His188 together coordinate heme b. An a ubiquinone-binding site is contributed by His193. The next 4 membrane-spanning stretches (helical) occupy residues 218-238 (HKDL…MSFF), 280-300 (LGGA…PFTH), 312-332 (LSQL…WAAT), and 339-358 (FIII…LSFP).

The protein belongs to the cytochrome b family. The cytochrome bc1 complex contains 3 respiratory subunits (MT-CYB, CYC1 and UQCRFS1), 2 core proteins (UQCRC1 and UQCRC2) and probably 6 low-molecular weight proteins. Requires heme b as cofactor.

It is found in the mitochondrion inner membrane. Component of the ubiquinol-cytochrome c reductase complex (complex III or cytochrome b-c1 complex) that is part of the mitochondrial respiratory chain. The b-c1 complex mediates electron transfer from ubiquinol to cytochrome c. Contributes to the generation of a proton gradient across the mitochondrial membrane that is then used for ATP synthesis. This Apodora papuana (Papuan olive python) protein is Cytochrome b (MT-CYB).